Consider the following 325-residue polypeptide: UPF0285 protein MM_0679 (325 aa).

It belongs to the UPF0285 family.

This Methanosarcina mazei (strain ATCC BAA-159 / DSM 3647 / Goe1 / Go1 / JCM 11833 / OCM 88) (Methanosarcina frisia) protein is UPF0285 protein MM_0679.